We begin with the raw amino-acid sequence, 968 residues long: RNA polymerase-associated protein RapA (968 aa).

One can recognise a Helicase ATP-binding domain in the interval 164-334; sequence DVGRRHAPRV…FARLRLLDPN (171 aa). Position 177 to 184 (177 to 184) interacts with ATP; it reads DEVGLGKT. The short motif at 280-283 is the DEAH box element; it reads DEAH. Residues 490-685 enclose the Helicase C-terminal domain; it reads RVEWLMGYLT…ALKAQLEQGR (196 aa).

Belongs to the SNF2/RAD54 helicase family. RapA subfamily. In terms of assembly, interacts with the RNAP. Has a higher affinity for the core RNAP than for the holoenzyme. Its ATPase activity is stimulated by binding to RNAP.

Its function is as follows. Transcription regulator that activates transcription by stimulating RNA polymerase (RNAP) recycling in case of stress conditions such as supercoiled DNA or high salt concentrations. Probably acts by releasing the RNAP, when it is trapped or immobilized on tightly supercoiled DNA. Does not activate transcription on linear DNA. Probably not involved in DNA repair. This is RNA polymerase-associated protein RapA from Salmonella paratyphi A (strain ATCC 9150 / SARB42).